We begin with the raw amino-acid sequence, 112 residues long: Conotoxin vil14.4 (112 aa).

Residues 1–22 (MGFRVLVLVVMATTSALPFTFF) form the signal peptide. The propeptide occupies 23 to 85 (EEPGRSPFRP…FAELSVGQRR (63 aa)). 2 disulfide bridges follow: Cys-91-Cys-111 and Cys-95-Cys-107.

The protein belongs to the conotoxin R superfamily. As to expression, expressed by the venom duct.

The protein resides in the secreted. The chain is Conotoxin vil14.4 from Conus villepinii (Villepin's cone).